We begin with the raw amino-acid sequence, 432 residues long: Enolase (432 aa).

(2R)-2-phosphoglycerate is bound at residue glutamine 167. The active-site Proton donor is glutamate 209. Mg(2+) contacts are provided by aspartate 246, glutamate 287, and aspartate 314. 4 residues coordinate (2R)-2-phosphoglycerate: lysine 339, arginine 368, serine 369, and lysine 390. Lysine 339 acts as the Proton acceptor in catalysis.

Belongs to the enolase family. Mg(2+) serves as cofactor.

Its subcellular location is the cytoplasm. The protein resides in the secreted. It is found in the cell surface. The catalysed reaction is (2R)-2-phosphoglycerate = phosphoenolpyruvate + H2O. The protein operates within carbohydrate degradation; glycolysis; pyruvate from D-glyceraldehyde 3-phosphate: step 4/5. Its function is as follows. Catalyzes the reversible conversion of 2-phosphoglycerate (2-PG) into phosphoenolpyruvate (PEP). It is essential for the degradation of carbohydrates via glycolysis. This is Enolase from Prochlorococcus marinus (strain MIT 9211).